Consider the following 104-residue polypeptide: MSNYAIIKTGGKQVKVEEGSVIYVEKLNVEAGQTVTFDEVIFVGGETTKVGAPLVEGATVVGEVEKHGKQKKVVTFQYKPKKHSHRKQGHRQPYTKVVIKSVNA.

This sequence belongs to the bacterial ribosomal protein bL21 family. As to quaternary structure, part of the 50S ribosomal subunit. Contacts protein L20.

Its function is as follows. This protein binds to 23S rRNA in the presence of protein L20. The polypeptide is Large ribosomal subunit protein bL21 (Lactococcus lactis subsp. cremoris (strain MG1363)).